The following is a 241-amino-acid chain: Carboxy-S-adenosyl-L-methionine synthase (241 aa).

Residues Tyr38, 63-65, 88-89, 116-117, Asn131, and Arg198 contribute to the S-adenosyl-L-methionine site; these read GCS, DN, and DI.

The protein belongs to the class I-like SAM-binding methyltransferase superfamily. Cx-SAM synthase family. Homodimer.

The catalysed reaction is prephenate + S-adenosyl-L-methionine = carboxy-S-adenosyl-L-methionine + 3-phenylpyruvate + H2O. Functionally, catalyzes the conversion of S-adenosyl-L-methionine (SAM) to carboxy-S-adenosyl-L-methionine (Cx-SAM). The polypeptide is Carboxy-S-adenosyl-L-methionine synthase (Haemophilus influenzae (strain 86-028NP)).